The following is a 488-amino-acid chain: Multidrug resistance outer membrane protein MdtP (488 aa).

The first 23 residues, 1 to 23, serve as a signal peptide directing secretion; it reads MINRQLSRLLLCSILGSTTLISG. Cys24 carries N-palmitoyl cysteine lipidation. Cys24 carries the S-diacylglycerol cysteine lipid modification.

The protein belongs to the outer membrane factor (OMF) (TC 1.B.17) family. As to quaternary structure, could be part of a tripartite efflux system composed of MdtN, MdtO and MdtP.

The protein resides in the cell outer membrane. Its function is as follows. Could be involved in resistance to puromycin, acriflavine and tetraphenylarsonium chloride. The polypeptide is Multidrug resistance outer membrane protein MdtP (mdtP) (Escherichia coli (strain K12)).